We begin with the raw amino-acid sequence, 218 residues long: Ribose-5-phosphate isomerase A (218 aa).

Substrate is bound by residues 28-31, 81-84, and 94-97; these read TGST, DGAD, and KGGG. Residue Glu-103 is the Proton acceptor of the active site. Lys-121 is a binding site for substrate.

The protein belongs to the ribose 5-phosphate isomerase family. Homodimer.

The enzyme catalyses aldehydo-D-ribose 5-phosphate = D-ribulose 5-phosphate. It participates in carbohydrate degradation; pentose phosphate pathway; D-ribose 5-phosphate from D-ribulose 5-phosphate (non-oxidative stage): step 1/1. Functionally, catalyzes the reversible conversion of ribose-5-phosphate to ribulose 5-phosphate. The sequence is that of Ribose-5-phosphate isomerase A from Methylococcus capsulatus (strain ATCC 33009 / NCIMB 11132 / Bath).